Consider the following 307-residue polypeptide: Elongation factor Ts (307 aa).

The segment at 80–83 (TDFV) is involved in Mg(2+) ion dislocation from EF-Tu.

It belongs to the EF-Ts family.

It localises to the cytoplasm. In terms of biological role, associates with the EF-Tu.GDP complex and induces the exchange of GDP to GTP. It remains bound to the aminoacyl-tRNA.EF-Tu.GTP complex up to the GTP hydrolysis stage on the ribosome. This Nitrobacter hamburgensis (strain DSM 10229 / NCIMB 13809 / X14) protein is Elongation factor Ts.